The primary structure comprises 562 residues: Tripeptidyl-peptidase 1 (562 aa).

The signal sequence occupies residues 1–19; sequence MGLQARLLGLLALVIAGKC. A propeptide spans 20 to 194 (removed in mature form); it reads TYNPEPDQRW…PEPQQVGTVS (175 aa). Cys111 and Cys122 form a disulfide bridge. Positions 198–562 constitute a Peptidase S53 domain; it reads GVTPSVLRQR…PALLKTLLNP (365 aa). N-linked (GlcNAc...) asparagine glycosylation is present at Asn209. N-linked (GlcNAc...) (high mannose) asparagine glycosylation occurs at Asn221. Active-site charge relay system residues include Glu271 and Asp275. Residues Asn285, Asn312, and Asn442 are each glycosylated (N-linked (GlcNAc...) asparagine). Intrachain disulfides connect Cys364–Cys525 and Cys521–Cys536. Ser474 serves as the catalytic Charge relay system. Ca(2+)-binding residues include Asp516 and Val517. Ca(2+) contacts are provided by Gly538, Gly540, and Asp542.

In terms of assembly, monomer. Interacts with CLN5. Interacts with CLN3. Requires Ca(2+) as cofactor. Activated by autocatalytic proteolytical processing upon acidification. N-glycosylation is required for processing and activity.

The protein resides in the lysosome. It localises to the melanosome. It carries out the reaction Release of an N-terminal tripeptide from a polypeptide, but also has endopeptidase activity.. Its function is as follows. Lysosomal serine protease with tripeptidyl-peptidase I activity. May act as a non-specific lysosomal peptidase which generates tripeptides from the breakdown products produced by lysosomal proteinases. Requires substrates with an unsubstituted N-terminus. The protein is Tripeptidyl-peptidase 1 (Tpp1) of Mus musculus (Mouse).